We begin with the raw amino-acid sequence, 197 residues long: Protein FAM219B (197 aa).

2 disordered regions span residues 1-77 (MATE…HRDH) and 117-142 (DENL…YSSA). Phosphoserine is present on residues S14, S125, and S127.

It belongs to the FAM219 family.

This chain is Protein FAM219B (Fam219b), found in Mus musculus (Mouse).